A 159-amino-acid polypeptide reads, in one-letter code: Ethylene-responsive transcription factor ERF069 (159 aa).

Disordered regions lie at residues 1 to 36 and 128 to 159; these read MKRI…KKLV and DAPT…EEVV. A DNA-binding region (AP2/ERF) is located at residues 74 to 134; the sequence is KFRGVRQRPW…IGPDAPTNFG (61 aa). The span at 136–148 shows a compositional bias: basic and acidic residues; sequence PDVDSAVVKKQDS.

It belongs to the AP2/ERF transcription factor family. ERF subfamily.

The protein localises to the nucleus. In terms of biological role, probably acts as a transcriptional activator. Binds to the GCC-box pathogenesis-related promoter element. May be involved in the regulation of gene expression by stress factors and by components of stress signal transduction pathways. The sequence is that of Ethylene-responsive transcription factor ERF069 (ERF069) from Arabidopsis thaliana (Mouse-ear cress).